A 637-amino-acid chain; its full sequence is Sodium-dependent proline transporter (637 aa).

Residues 1–45 are Cytoplasmic-facing; it reads MKKLQEAHLRKPITPDLLMTPSDQGDVDLDVDFAADRGNWTGKLD. At threonine 20 the chain carries Phosphothreonine. Residue serine 22 is modified to Phosphoserine. Helical transmembrane passes span 46–66, 74–93, and 117–137; these read FLLSCIGYCVGLGNVWRFPYR, AFLVPYFLMLAICGIPLFFL, and GAGAAMLLIVGLVAIYYNMII. The Extracellular portion of the chain corresponds to 138–214; that stretch reads AYVLFYLFAS…QGIGRPGEIR (77 aa). Asparagine 182 carries an N-linked (GlcNAc...) asparagine glycan. A run of 9 helical transmembrane segments spans residues 215–233, 242–259, 295–312, 324–345, 378–397, 425–443, 459–479, 500–519, and 538–556; these read WNLCLCLLLAWVIVFLCIL, VVYFTATFPYLILLMLLV, IFYSLGVGFGGLLTFASY, FIVTLGNAITSILAGFAIFSVL, LPLSPFWSFLFFFMLLTLGL, VFSGLICVAMYLMGLILTT, SFGLMVVVITTCLAVTRVYGI, ACWLFLSPATLLALLVYSIV, and LGILMGLLSCLMIPAGMLV. The Cytoplasmic segment spans residues 557 to 637; sequence AVLREEGSLW…IAEEEEESMM (81 aa). Residues serine 573 and serine 582 each carry the phosphoserine modification. Phosphothreonine is present on threonine 588. Position 591 is a phosphotyrosine (tyrosine 591). Phosphoserine occurs at positions 598 and 600.

This sequence belongs to the sodium:neurotransmitter symporter (SNF) (TC 2.A.22) family. SLC6A7 subfamily.

The protein localises to the synaptic cell membrane. It carries out the reaction L-proline(out) + chloride(out) + 2 Na(+)(out) = L-proline(in) + chloride(in) + 2 Na(+)(in). The enzyme catalyses L-pipecolate(out) + chloride(out) + 2 Na(+)(out) = L-pipecolate(in) + chloride(in) + 2 Na(+)(in). In terms of biological role, brain specific sodium (and chloride)-dependent proline transporter. Terminates the action of proline by its high affinity sodium-dependent reuptake into presynaptic terminals. In Mus musculus (Mouse), this protein is Sodium-dependent proline transporter.